The chain runs to 448 residues: Putative flavin-containing monooxygenase FMO GS-OX-like 10 (448 aa).

18–23 contributes to the FAD binding site; the sequence is GAGAAG. 212–217 is a binding site for NADP(+); that stretch reads GSSVSG.

This sequence belongs to the FMO family. Requires FAD as cofactor.

Catalyzes the conversion of methylthioalkyl glucosinolates of any chain length into methylsulfinylalkyl glucosinolates. This Arabidopsis thaliana (Mouse-ear cress) protein is Putative flavin-containing monooxygenase FMO GS-OX-like 10.